A 446-amino-acid chain; its full sequence is Corrinoid/iron-sulfur protein large subunit (446 aa).

Residues 2-59 (PLTGLEIYKQLPKKNCGECGTPTCLAFAMNLASGKASLDSCPYVSDAAREALDAAAAP) form the 4Fe-4S domain. [4Fe-4S] cluster contacts are provided by Cys-17, Cys-20, Cys-25, and Cys-42. 5-methoxybenzimidazolylcob(I)amide-binding positions include Thr-340, Thr-346, 370–373 (GLSV), and Ala-433.

As to quaternary structure, heterohexamer composed of 2 subunits of AcsC, 2 subunits of AcsD and 2 subunits of AcsE. [4Fe-4S] cluster serves as cofactor.

Acts as a methyl group carrier in the anaerobic acetyl-CoA pathway (Wood-Ljungdahl pathway) of carbon monoxide and carbon dioxide fixation. Binds the corrinoid 5-methoxybenzimidazolylcobamide which is then methylated by the AcsE subunit. The sequence is that of Corrinoid/iron-sulfur protein large subunit (acsC) from Moorella thermoacetica (Clostridium thermoaceticum).